An 82-amino-acid polypeptide reads, in one-letter code: UPF0335 protein pRhico085 (82 aa).

Belongs to the UPF0335 family.

This Azospirillum brasilense protein is UPF0335 protein pRhico085.